The following is a 427-amino-acid chain: MFFTCGPNEAMVVSGFCRSPPVMVAGGRVFVLPCIQQIQRISLNTLTLNVKSEKVYTRHGVPISVTGIAQVKIQGQNKEMLAAACQMFLGKTEAEIAHIALETLEGHQRAIMAHMTVEEIYKDRQKFSEQVFKVASSDLVNMGISVVSYTLKDIHDDQDYLHSLGKARTAQVQKDARIGEAEAKRDAGIREAKAKQEKVSAQYLSEIEMAKAQRDYELKKAAYDIEVNTRRAQADLAYQLQVAKTKQQIEEQRVQVQVVERAQQVAVQEQEIARREKELEARVRKPAEAERYKLERLAEAEKSQLIMQAEAEAASVRMRGEAEAFAIGARARAEAEQMAKKAEAFQLYQEAAQLDMLLEKLPQVAEEISGPLTSANKITLVSSGSGTMGAAKVTGEVLDILTRLPESVERLTGVSISQVNHKPLRTA.

Residues Ser-19, Ser-163, and Ser-385 each carry the phosphoserine modification. Thr-387 bears the Phosphothreonine mark.

Belongs to the band 7/mec-2 family. Flotillin subfamily. Heterooligomeric complex of flotillin-1 and flotillin-2 and caveolin-1 and caveolin-2. Interacts with ECPAS.

It is found in the cell membrane. The protein localises to the endosome. It localises to the membrane. Its subcellular location is the caveola. The protein resides in the melanosome. It is found in the membrane raft. Its function is as follows. May act as a scaffolding protein within caveolar membranes, functionally participating in formation of caveolae or caveolae-like vesicles. In Homo sapiens (Human), this protein is Flotillin-1 (FLOT1).